A 273-amino-acid chain; its full sequence is Dermonecrotic toxin LdSicTox-alphaIB3ai (273 aa).

H5 is a catalytic residue. Residues E25 and D27 each contribute to the Mg(2+) site. Residue H41 is the Nucleophile of the active site. 2 disulfides stabilise this stretch: C45–C51 and C47–C190. D85 contributes to the Mg(2+) binding site.

This sequence belongs to the arthropod phospholipase D family. Class II subfamily. It depends on Mg(2+) as a cofactor. In terms of tissue distribution, expressed by the venom gland.

Its subcellular location is the secreted. The catalysed reaction is an N-(acyl)-sphingosylphosphocholine = an N-(acyl)-sphingosyl-1,3-cyclic phosphate + choline. It carries out the reaction an N-(acyl)-sphingosylphosphoethanolamine = an N-(acyl)-sphingosyl-1,3-cyclic phosphate + ethanolamine. The enzyme catalyses a 1-acyl-sn-glycero-3-phosphocholine = a 1-acyl-sn-glycero-2,3-cyclic phosphate + choline. It catalyses the reaction a 1-acyl-sn-glycero-3-phosphoethanolamine = a 1-acyl-sn-glycero-2,3-cyclic phosphate + ethanolamine. Its function is as follows. Dermonecrotic toxins cleave the phosphodiester linkage between the phosphate and headgroup of certain phospholipids (sphingolipid and lysolipid substrates), forming an alcohol (often choline) and a cyclic phosphate. This toxin acts on sphingomyelin (SM). It may also act on ceramide phosphoethanolamine (CPE), lysophosphatidylcholine (LPC) and lysophosphatidylethanolamine (LPE), but not on lysophosphatidylserine (LPS), and lysophosphatidylglycerol (LPG). It acts by transphosphatidylation, releasing exclusively cyclic phosphate products as second products. Induces dermonecrosis, hemolysis, increased vascular permeability, edema, inflammatory response, and platelet aggregation. This Loxosceles deserta (Desert recluse spider) protein is Dermonecrotic toxin LdSicTox-alphaIB3ai.